The chain runs to 401 residues: Ascaroside receptor GPR3 (401 aa).

Topologically, residues 1–16 (MQPFGDAWSQRHLAGV) are extracellular. The helical transmembrane segment at 17-37 (VLAGSVLSIVGSLYMILGFFF) threads the bilayer. Residues 38–47 (LRECRSFRHK) lie on the Cytoplasmic side of the membrane. Residues 48–68 (LILGLAVSDLLLALNFFIPSL) traverse the membrane as a helical segment. Residues 69–93 (SMVTGREISSPWNEGFCSANGFLMQ) lie on the Extracellular side of the membrane. Cys-85 and Cys-159 form a disulfide bridge. The chain crosses the membrane as a helical span at residues 94-114 (LFFAQIDVWQISIALITLLML). Over 115–128 (SGPSMVLKWIRENV) the chain is Cytoplasmic. Residues 129–149 (WAVWLFPWLVSLIAAFFAFGF) traverse the membrane as a helical segment. Residues 150–175 (WDYANVGGFCWLGSRNIRLYFNYIPR) are Extracellular-facing. Residues 176–196 (WIIILVCLVIYIAVYRLILHA) form a helical membrane-spanning segment. The Cytoplasmic segment spans residues 197-294 (RRRANIQKTY…QKQVRKIAIQ (98 aa)). The tract at residues 206 to 259 (YRGRASDRAPPQPVTTTAPATNPESEKVNPDEISSGNGSSSLDTSRSGSSTGFT) is disordered. Residues 239–257 (SSGNGSSSLDTSRSGSSTG) show a composition bias toward low complexity. Residues 295-315 (MISYPLAYAVLWAIPTIVMII) traverse the membrane as a helical segment. Topologically, residues 316 to 321 (QVARGG) are extracellular. Residues 322-342 (EGVSIHVEGLAKMLLVFNGFV) traverse the membrane as a helical segment. Residues 343-401 (DAHVYGFNERTAMGWRQRIRPAAQEDDEEAAGTSGGVHEVVSRPEPTLKNPNVWQQNMV) lie on the Cytoplasmic side of the membrane. Positions 362 to 401 (RPAAQEDDEEAAGTSGGVHEVVSRPEPTLKNPNVWQQNMV) are disordered. Over residues 391-401 (KNPNVWQQNMV) the composition is skewed to polar residues.

This sequence belongs to the G-protein coupled receptor 1 family. In terms of assembly, interacts with ascaroside receptor GPR2; may form a functional heterodimer. Interacts with guanine nucleotide-binding protein alpha GPA2; to activate adenylate cyclase and positively regulate nematode trap formation.

The protein localises to the cell membrane. Functionally, g protein-coupled receptor that senses nematode ascaroside pheromones and signals via adenylate cyclase to positively regulate trap formation for nematode capture. This is Ascaroside receptor GPR3 from Arthrobotrys oligospora (strain ATCC 24927 / CBS 115.81 / DSM 1491) (Nematode-trapping fungus).